A 474-amino-acid polypeptide reads, in one-letter code: L-arabinose isomerase (474 aa).

Positions 306, 331, 348, and 447 each coordinate Mn(2+).

The protein belongs to the arabinose isomerase family. Requires Mn(2+) as cofactor.

It catalyses the reaction beta-L-arabinopyranose = L-ribulose. Its pathway is carbohydrate degradation; L-arabinose degradation via L-ribulose; D-xylulose 5-phosphate from L-arabinose (bacterial route): step 1/3. Its function is as follows. Catalyzes the conversion of L-arabinose to L-ribulose. The protein is L-arabinose isomerase of Lactiplantibacillus plantarum (strain ATCC BAA-793 / NCIMB 8826 / WCFS1) (Lactobacillus plantarum).